A 356-amino-acid polypeptide reads, in one-letter code: Inactive ubiquitin thioesterase OTULINL (356 aa).

The tract at residues methionine 1 to glycine 22 is disordered. The interval methionine 1–lysine 83 is required for membrane binding. Positions lysine 128 to phenylalanine 356 constitute an OTU domain.

It belongs to the peptidase C65 family. Otulin subfamily. Does not bind ubiquitin or ubiquitin-like proteins.

It is found in the cytoplasm. The protein localises to the endoplasmic reticulum membrane. The protein resides in the nucleus envelope. Its function is as follows. Lacks deubiquitinase activity. This Homo sapiens (Human) protein is Inactive ubiquitin thioesterase OTULINL.